Consider the following 136-residue polypeptide: Cell wall synthesis protein CwsA (136 aa).

The chain crosses the membrane as a helical span at residues 94 to 114 (LLIAAVAVTVLGGGAAAFSIV).

Belongs to the CwsA family. As to quaternary structure, interacts with CrgA and Wag31.

It localises to the cell membrane. Its function is as follows. Required for regulated cell division, cell wall synthesis and the maintenance of cell shape. This Mycolicibacterium smegmatis (strain ATCC 700084 / mc(2)155) (Mycobacterium smegmatis) protein is Cell wall synthesis protein CwsA.